We begin with the raw amino-acid sequence, 36 residues long: Pancreatic polypeptide (36 aa).

Tyr36 is subject to Tyrosine amide.

Belongs to the NPY family.

The protein localises to the secreted. In terms of biological role, hormone secreted by pancreatic cells that acts as a regulator of pancreatic and gastrointestinal functions. The protein is Pancreatic polypeptide (PPY) of Anser anser anser (Western greylag goose).